Here is a 374-residue protein sequence, read N- to C-terminus: Ribosomal RNA large subunit methyltransferase G (374 aa).

It belongs to the methyltransferase superfamily. RlmG family.

The protein localises to the cytoplasm. The enzyme catalyses guanosine(1835) in 23S rRNA + S-adenosyl-L-methionine = N(2)-methylguanosine(1835) in 23S rRNA + S-adenosyl-L-homocysteine + H(+). Its function is as follows. Specifically methylates the guanine in position 1835 (m2G1835) of 23S rRNA. The polypeptide is Ribosomal RNA large subunit methyltransferase G (Photobacterium profundum (strain SS9)).